Reading from the N-terminus, the 425-residue chain is MQLTPLHIQGGRELRGEIAVQGSKNAALPIIVASLLSSEKVTLHGIPRLSDVYTILDLVHHIGTQHQWVGPNSLELHTPSIVNTDAPYALVNKMRASFVVLGAILARAGQARVSMPGGCAWGPRPVDQHVKALRALGAEISEEGGNFHARRQGSLNGTFVFELLTVGGTHNAVLAAVLGDGVVTLENASIDTDVVDLIEFLNSLGADIQGAGTNTLVIRGVQQLRGGEYTVIPDRIEAGTFMMLAAATRSQLTVRNVRPDHLRAVSAKLQEMGVDILEAGNSLIVDARQRELRPVNVTTQSYPGFPTDVQPQMSALLATVPGTSVVQDPVYPDRLTHVAELHRMGANITVSGYTQVIQGSALHAAPVKAADLRAGAALFIAGLTCTGETVIDGVQYLNRGYENLAERLCGIGATAQQTELAVAMD.

24–25 (KN) contributes to the phosphoenolpyruvate binding site. R95 serves as a coordination point for UDP-N-acetyl-alpha-D-glucosamine. The active-site Proton donor is the C119. C119 bears the 2-(S-cysteinyl)pyruvic acid O-phosphothioketal mark. UDP-N-acetyl-alpha-D-glucosamine-binding positions include 124-128 (RPVDQ), D308, and V330.

This sequence belongs to the EPSP synthase family. MurA subfamily.

The protein resides in the cytoplasm. It catalyses the reaction phosphoenolpyruvate + UDP-N-acetyl-alpha-D-glucosamine = UDP-N-acetyl-3-O-(1-carboxyvinyl)-alpha-D-glucosamine + phosphate. It participates in cell wall biogenesis; peptidoglycan biosynthesis. Its function is as follows. Cell wall formation. Adds enolpyruvyl to UDP-N-acetylglucosamine. This is UDP-N-acetylglucosamine 1-carboxyvinyltransferase from Deinococcus deserti (strain DSM 17065 / CIP 109153 / LMG 22923 / VCD115).